The following is a 398-amino-acid chain: MMKIKPVKVESIENPKRFLNSRLLTKIEVEEAIEKALKQLYINIDYFGEEYPTPATFNNIYKVMDNTEWTNGFWTGCLWLAYEYNQDKKLKNIAHKNVLSFLNRINNRIALDHHDLGFLYTPSCTAEYRINGDVKALEATIKAADKLMERYQEKGGFIQAWGELGYKEHYRLIIDCLLNIQLLFFAYEQTGDEKYRQVAVNHFYASANNVVRDDSSAFHTFYFDPETGEPLKGVTRQGYSDESSWARGQAWGIYGIPLSYRKMKDYQQIILFKGMTNYFLNRLPEDKVSYWDLIFTDGSGQPRDTSATATAVCGIHEMLKYLPEVDPDKETYKYAMHTMLRSLIEQYSNNELIAGRPLLLHGVYSWHSGKGVDEGNIWGDYYYLEALIRFYKDWELYW.

Aspartate 115 acts as the Nucleophile in catalysis. Residues aspartate 115, aspartate 175, glycine 233, threonine 235, arginine 247, tryptophan 251, serine 365, and serine 368 each coordinate substrate. Aspartate 175 acts as the Proton donor in catalysis.

This sequence belongs to the glycosyl hydrolase 88 family. Monomer.

The enzyme catalyses beta-D-4-deoxy-Delta(4)-GlcpA-(1-&gt;3)-beta-D-GalpNAc6S + H2O = N-acetyl-beta-D-galactosamine 6-sulfate + 5-dehydro-4-deoxy-D-glucuronate. Its function is as follows. Catalyzes the hydrolysis of unsaturated hyaluronate and chondroitin disaccharides. Also degrades unsaturated heparin disaccharides. Releases 4-deoxy-4,5-didehydro D-glucuronic acid or 4-deoxy-4,5-didehydro L-iduronic acid from chondroitin disaccharides, hyaluronan disaccharides and heparin disaccharides and cleaves both glycosidic (1-&gt;3) and (1-&gt;4) bonds. Prefers sulfated glycosaminoglycans compared to unsulfated glycosaminoglycans. Probably required for mammalian cells invasion through the degradation of extracellular sulfated glycosaminoglycans such as chondroitin and hyaluronan. The sequence is that of Unsaturated chondroitin disaccharide hydrolase from Streptococcus agalactiae serotype III (strain NEM316).